We begin with the raw amino-acid sequence, 98 residues long: MSVSIKPLEDRIVVRPLEAEQTTASGLVIPDSAQEKPQEGEVVAIGPGRFDDNGNRVPVDVAVGDVVIYSKYGGTEVKTGGNEYLVLSARDVLAIVVK.

Belongs to the GroES chaperonin family. As to quaternary structure, heptamer of 7 subunits arranged in a ring. Interacts with the chaperonin GroEL.

It is found in the cytoplasm. Its function is as follows. Together with the chaperonin GroEL, plays an essential role in assisting protein folding. The GroEL-GroES system forms a nano-cage that allows encapsulation of the non-native substrate proteins and provides a physical environment optimized to promote and accelerate protein folding. GroES binds to the apical surface of the GroEL ring, thereby capping the opening of the GroEL channel. This Paenarthrobacter aurescens (strain TC1) protein is Co-chaperonin GroES.